The chain runs to 145 residues: Large ribosomal subunit protein uL11 (145 aa).

This sequence belongs to the universal ribosomal protein uL11 family. As to quaternary structure, part of the ribosomal stalk of the 50S ribosomal subunit. Interacts with L10 and the large rRNA to form the base of the stalk. L10 forms an elongated spine to which L12 dimers bind in a sequential fashion forming a multimeric L10(L12)X complex. In terms of processing, one or more lysine residues are methylated.

Its function is as follows. Forms part of the ribosomal stalk which helps the ribosome interact with GTP-bound translation factors. This chain is Large ribosomal subunit protein uL11, found in Francisella philomiragia subsp. philomiragia (strain ATCC 25017 / CCUG 19701 / FSC 153 / O#319-036).